The primary structure comprises 331 residues: Ribonuclease Z (331 aa).

His56, His58, Asp60, His61, His162, Asp235, and His297 together coordinate Zn(2+). Asp60 functions as the Proton acceptor in the catalytic mechanism.

It belongs to the RNase Z family. In terms of assembly, homodimer. Requires Zn(2+) as cofactor.

It carries out the reaction Endonucleolytic cleavage of RNA, removing extra 3' nucleotides from tRNA precursor, generating 3' termini of tRNAs. A 3'-hydroxy group is left at the tRNA terminus and a 5'-phosphoryl group is left at the trailer molecule.. In terms of biological role, zinc phosphodiesterase, which displays some tRNA 3'-processing endonuclease activity. Probably involved in tRNA maturation, by removing a 3'-trailer from precursor tRNA. The chain is Ribonuclease Z (rnz) from Deinococcus radiodurans (strain ATCC 13939 / DSM 20539 / JCM 16871 / CCUG 27074 / LMG 4051 / NBRC 15346 / NCIMB 9279 / VKM B-1422 / R1).